A 397-amino-acid chain; its full sequence is MASEGITEIDSGLIETNYDNVVYTFDDLNLKPNIVRGIFGYGYESPSAIQQRAILPITEGRDVLAQAQSGTGKTATFTISALQRIDENEKSTQALILAPTRELALQIQNVITHIGLYLNVTVHASIGGTSMKDDIEAFKSGVQIVVGTPGRVFDMIERRFFKTDKVKMFILDEADEMLSSGFKEQIYNIFRLLPETTQVVLLSATMPQDVLEVTTKFMNNPVRILVKKDELTLEGIKQFYINVEQEDYKFDCLCDLYDSISVTQAVIFCNTRSKVEFLTTKLKGENFTVSAIHADLPQADRDTIMNEFRSGSSRILISTDLLARGIDVQQVSLVINYDLPANKENYIHRIGRGGRFGRKGVAINFVTDQDVGMMREIEKFYSTQIEEMPADIGALFN.

A Q motif motif is present at residues 23 to 51 (YTFDDLNLKPNIVRGIFGYGYESPSAIQQ). The 171-residue stretch at 54–224 (ILPITEGRDV…TKFMNNPVRI (171 aa)) folds into the Helicase ATP-binding domain. 67–74 (AQSGTGKT) serves as a coordination point for ATP. Positions 172-175 (DEAD) match the DEAD box motif. In terms of domain architecture, Helicase C-terminal spans 235–396 (GIKQFYINVE…EMPADIGALF (162 aa)).

The protein belongs to the DEAD box helicase family. eIF4A subfamily. As to quaternary structure, component of the eIF4F complex, which composition varies with external and internal environmental conditions. It is composed of at least eIF4A, eIF4E and eIF4G.

The protein resides in the cytoplasm. The catalysed reaction is ATP + H2O = ADP + phosphate + H(+). Its function is as follows. ATP-dependent RNA helicase which is a subunit of the eIF4F complex involved in cap recognition and is required for mRNA binding to ribosome. In the current model of translation initiation, eIF4A unwinds RNA secondary structures in the 5'-UTR of mRNAs which is necessary to allow efficient binding of the small ribosomal subunit, and subsequent scanning for the initiator codon. This chain is ATP-dependent RNA helicase eIF4A (TIF1), found in Debaryomyces hansenii (strain ATCC 36239 / CBS 767 / BCRC 21394 / JCM 1990 / NBRC 0083 / IGC 2968) (Yeast).